A 332-amino-acid polypeptide reads, in one-letter code: Beta-1,3-N-acetylglucosaminyltransferase radical fringe (332 aa).

The Cytoplasmic segment spans residues 1–6 (MSRARR). The chain crosses the membrane as a helical; Signal-anchor for type II membrane protein span at residues 7–29 (VLCRACLALAAVLAVLLLLPLPL). At 30–332 (PLPLPRAPAP…MKNRVEGAFQ (303 aa)) the chain is on the lumenal side. Position 75 (Arg-75) interacts with substrate. An N-linked (GlcNAc...) asparagine glycan is attached at Asn-114. Intrachain disulfides connect Cys-115–Cys-126 and Cys-144–Cys-208. Substrate is bound at residue Asp-148. Asp-149 is a binding site for Mn(2+). Residue Asp-238 is part of the active site. A Mn(2+)-binding site is contributed by His-262. Cysteines 312 and 321 form a disulfide.

It belongs to the glycosyltransferase 31 family. It depends on Mn(2+) as a cofactor. In terms of tissue distribution, detected in all the examined tissues (12.5 dpc). High expression found in adult brain.

The protein resides in the golgi apparatus membrane. The catalysed reaction is 3-O-(alpha-L-fucosyl)-L-threonyl-[EGF-like domain protein] + UDP-N-acetyl-alpha-D-glucosamine = 3-O-(N-acetyl-beta-D-glucosaminyl-(1-&gt;3)-alpha-L-fucosyl)-L-threonyl-[EGF-like domain protein] + UDP + H(+). It carries out the reaction 3-O-(alpha-L-fucosyl)-L-seryl-[EGF-like domain protein] + UDP-N-acetyl-alpha-D-glucosamine = 3-O-(N-acetyl-beta-D-glucosaminyl-(1-&gt;3)-alpha-L-fucosyl)-L-seryl-[EGF-like domain protein] + UDP + H(+). In terms of biological role, glycosyltransferase that initiates the elongation of O-linked fucose residues attached to EGF-like repeats in the extracellular domain of Notch molecules. Modulates NOTCH1 activity by modifying O-fucose residues at specific EGF-like domains resulting in enhancement of NOTCH1 activation by DLL1 and JAG1. May be involved in limb formation and in neurogenesis. The polypeptide is Beta-1,3-N-acetylglucosaminyltransferase radical fringe (Mus musculus (Mouse)).